Here is a 310-residue protein sequence, read N- to C-terminus: Ribosomal RNA small subunit methyltransferase H (310 aa).

S-adenosyl-L-methionine-binding positions include 33 to 35 (AGH), D53, F79, D100, and Q107.

It belongs to the methyltransferase superfamily. RsmH family.

It localises to the cytoplasm. It catalyses the reaction cytidine(1402) in 16S rRNA + S-adenosyl-L-methionine = N(4)-methylcytidine(1402) in 16S rRNA + S-adenosyl-L-homocysteine + H(+). Functionally, specifically methylates the N4 position of cytidine in position 1402 (C1402) of 16S rRNA. The sequence is that of Ribosomal RNA small subunit methyltransferase H from Clostridium botulinum (strain Eklund 17B / Type B).